We begin with the raw amino-acid sequence, 622 residues long: WD repeat-containing protein 70 (622 aa).

Residues 37 to 55 (TAVERSKKTLEAREKEEQI) are compositionally biased toward basic and acidic residues. Residues 37–141 (TAVERSKKTL…DNPVKGIPDS (105 aa)) form a disordered region. Low complexity predominate over residues 67–84 (SSSRQKNTDTSSSSSGSE). Residues 120–132 (SDDEDEEQHEDDD) are compositionally biased toward acidic residues. 7 WD repeats span residues 148–187 (HGTKTVSALGLDPSGARLVTGGFDYDVRFWDFAGMDASLQ), 195–236 (CECH…ECVK), 249–289 (GHTA…KHKG), 298–337 (GKRVIPTCCTYSRDGKFIAAGCQDGSIQIWDRNMSVHTKF), 344–383 (TPGTDTSCVTFSYAGNILATRGGDDTLKTWDIRKFKNPLN), 389–434 (ANYF…KVYE), and 437–476 (VTEASVVRCLWHPKLNQIMVGTGNGLAKVYYDPNRSQRGA). A compositionally biased stretch (basic and acidic residues) spans 508–533 (REPRQRSTRKQLEKDRLDPVKSHKPE). Disordered stretches follow at residues 508–549 (REPR…GTHG) and 602–622 (AEVESDEEETDNEPEWKKRKI). The span at 539 to 549 (PGRGGRVGTHG) shows a compositional bias: gly residues. The span at 604-614 (VESDEEETDNE) shows a compositional bias: acidic residues.

The protein belongs to the WD repeat GAD-1 family.

The chain is WD repeat-containing protein 70 (wdr70) from Xenopus tropicalis (Western clawed frog).